We begin with the raw amino-acid sequence, 303 residues long: E3 ubiquitin-protein ligase CCNB1IP1 homolog (303 aa).

An RING-type; degenerate zinc finger spans residues Cys-3–Asp-42. A coiled-coil region spans residues Leu-119–Gln-184. The segment at Val-201–Pro-268 is disordered.

As to quaternary structure, interacts with ZIP4 and PTD. Expressed in young panicles.

The protein resides in the nucleus. It localises to the chromosome. It carries out the reaction S-ubiquitinyl-[E2 ubiquitin-conjugating enzyme]-L-cysteine + [acceptor protein]-L-lysine = [E2 ubiquitin-conjugating enzyme]-L-cysteine + N(6)-ubiquitinyl-[acceptor protein]-L-lysine.. It participates in protein modification; protein ubiquitination. Functionally, ubiquitin E3 ligase required for class I crossover (CO) formation during meiosis. The chain is E3 ubiquitin-protein ligase CCNB1IP1 homolog from Oryza sativa subsp. japonica (Rice).